The following is a 197-amino-acid chain: A-kinase anchor protein 14 (197 aa).

Composition is skewed to polar residues over residues 1–11 and 19–29; these read MSETQNSTSQK and AASQTMPNTQD. Positions 1 to 29 are disordered; sequence MSETQNSTSQKAMDEDNKAASQTMPNTQD. The segment at 35 to 52 is RII-binding; it reads ELTQVALALVEDVINYAV.

As to quaternary structure, binds to type II regulatory subunits (RII). As to expression, present in cilia (at protein level). Expressed in tissues containing axoneme-based organelles (cilia and/or flagella): trachea and testis. Highly expressed in airway cilia.

The protein localises to the cytoplasm. Functionally, binds to type II regulatory subunits of protein kinase A and anchors/targets them. This Homo sapiens (Human) protein is A-kinase anchor protein 14 (AKAP14).